We begin with the raw amino-acid sequence, 2050 residues long: Unconventional myosin-XVIIIa (2050 aa).

Basic and acidic residues-rich tracts occupy residues 1-17 and 23-34; these read MFNL…GRKE and EKKERMSAAELR. Residues 1-34 form a disordered region; sequence MFNLMKKDKDKDGGRKEKKEKKEKKERMSAAELR. A mediates nucleotide-independent binding to F-actin and interaction with GOLPH3 region spans residues 1–398; sequence MFNLMKKDKD…LDVDEDDIEK (398 aa). 4 positions are modified to phosphoserine: Ser35, Ser52, Ser72, and Ser74. Thr79 carries the post-translational modification Phosphothreonine. A phosphoserine mark is found at Ser83 and Ser98. Thr99 carries the post-translational modification Phosphothreonine. Phosphoserine occurs at positions 102 and 103. The Interaction with actin signature appears at 114–118; that stretch reads RGSVL. Phosphoserine is present on residues Ser140, Ser145, Ser157, Ser160, Ser164, Ser234, and Ile340. A disordered region spans residues 140 to 167; sequence SFSQRSRDESASETSTPSEHSAAPSPQV. Residues 220–311 form the PDZ domain; it reads ELELQRRPTG…SVRLKVQPIP (92 aa). Residues 349 to 401 enclose the Myosin N-terminal SH3-like domain; it reads TEKVWLVHRDGFSLASQLKSEELSLPEGKARVKLDHDGAILDVDEDDIEKANA. Positions 405-1181 constitute a Myosin motor domain; the sequence is DRLEDLASLV…TLARLEEQRD (777 aa). Residue 498-505 coordinates ATP; it reads GSSGSGKT. Residues Ser983, Ser1063, Ser1064, and Ser1066 each carry the phosphoserine modification. Residues 1051 to 1071 form a disordered region; that stretch reads PGEPRSASSRRVSSSSELDLP. Residues 1055 to 1066 are compositionally biased toward low complexity; that stretch reads RSASSRRVSSSS. One can recognise an IQ domain in the interval 1184 to 1213; it reads TSRHLTLFQAACRGYLARQHFKKRKIQDLA. Residues 1242–1967 are a coiled coil; the sequence is LIQVQLSEEQ…KKNKLEGDSD (726 aa). Residues 1448 to 1477 form a disordered region; that stretch reads RNHELEKKQRRFDSELSQAHEETQREKLQR. A Phosphoserine modification is found at Ser1636. Residues 1848-1897 form a disordered region; it reads MEKLTEERDQRAAAENREKEQNKRLQRQLRDTKEEMSELARKEAEASRKK. A phosphoserine mark is found at Ser1938, Ser1966, Ser1970, Ser1994, Ser1998, Ser2002, Ser2003, Ser2016, Ser2032, Ser2037, and Ser2039. The segment at 1955-2050 is disordered; that stretch reads YQKKKNKLEG…TEAKLTETSA (96 aa). Residue Thr2041 is modified to Phosphothreonine. A compositionally biased stretch (basic and acidic residues) spans 2041 to 2050; that stretch reads TEAKLTETSA.

The protein belongs to the TRAFAC class myosin-kinesin ATPase superfamily. Myosin family. Homodimer. Forms a tripartite complex with CDC42BPA/CDC42BPB and LURAP1 with the latter acting as an adapter connecting CDC42BPA/CDC42BPB and MYO18A. Binds F-actin; regulated by ADP and GOLPH3. Interacts with GOLPH3; the interaction is direct and may link Golgi membranes to the actin cytoskeleton. Interacts with JAK3. Interacts with MSR1 and CD14. Phosphorylated on tyrosine upon CSF1R activation. Isoform 6 is phosphorylated on Ser-340. Isoform 1; Expressed ubiquitously. Isoform 2: Specifically expressed in most hematopoietic cells. Isoform 3: Predominantly expressed in alveolar macrophages.

Its subcellular location is the golgi apparatus. It localises to the trans-Golgi network. The protein localises to the golgi outpost. It is found in the cytoplasm. The protein resides in the cytoskeleton. Its subcellular location is the microtubule organizing center. It localises to the endoplasmic reticulum-Golgi intermediate compartment. Its function is as follows. May link Golgi membranes to the cytoskeleton and participate in the tensile force required for vesicle budding from the Golgi. Thereby, may play a role in Golgi membrane trafficking and could indirectly give its flattened shape to the Golgi apparatus. Alternatively, in concert with LURAP1 and CDC42BPA/CDC42BPB, has been involved in modulating lamellar actomyosin retrograde flow that is crucial to cell protrusion and migration. May be involved in the maintenance of the stromal cell architectures required for cell to cell contact. Regulates trafficking, expression, and activation of innate immune receptors on macrophages. Plays a role to suppress inflammatory responsiveness of macrophages via a mechanism that modulates CD14 trafficking. Acts as a receptor of surfactant-associated protein A (SFTPA1/SP-A) and plays an important role in internalization and clearance of SFTPA1-opsonized S.aureus by alveolar macrophages. Strongly enhances natural killer cell cytotoxicity. In Mus musculus (Mouse), this protein is Unconventional myosin-XVIIIa (Myo18a).